We begin with the raw amino-acid sequence, 562 residues long: MSGTILENLSGRKLSILVTTLLLCQVLCFLLGGLYAPLPAGHVTVLGSLCREDHGRQNDTGFLLYSRGAGACIPVTREEVEQDSTKMANELVHVFQMPLPRDLRDLDYSRWQQNLIGVLQVEFGYDSSSELREPPRELQLTIDMRLAYRNKGDPDNGWKLYAHGVEHRYLDCVSSHVGPTETLYSCDMIPLFELGALHHSFYLLNLRFPLDTPSQMNLQFGHMHDLTLTAIHQNGGFTQIWLLLKTVLFPFVVGIMIWFWRRVHLLQRSPALLEYMLIYLGAALTFLNLPLEYLSLVFEMPYMLLLSDIRQGIFYAMLLTFWLVFAGEHMLIQDAPNKSTIRSRYWKHLSAVVVGCISLFVFDICERGVQLRNPFYSIWAMPLAAKMAMTFIVLAGVSAAIYFLFLCYMIWKVFRNIGDKRTSLPSMSQARRLHYESLIYRFKFLMLATIVCAALTVTGFIMGQRAEGQWDWNDNVAIQPTSAFLTGVYGMWNIYIFALLILYAPSHKQWPTMHHSDETTQSNENIVASAASEEIEFSHLPSDSNPSEISSLTSFTRKVAFD.

The Cytoplasmic segment spans residues 1–13 (MSGTILENLSGRK). Residues 14–34 (LSILVTTLLLCQVLCFLLGGL) form a helical membrane-spanning segment. At 35-239 (YAPLPAGHVT…AIHQNGGFTQ (205 aa)) the chain is on the lumenal side. A glycan (N-linked (GlcNAc...) asparagine) is linked at Asn58. A helical membrane pass occupies residues 240 to 260 (IWLLLKTVLFPFVVGIMIWFW). Residues 261–270 (RRVHLLQRSP) lie on the Cytoplasmic side of the membrane. Residues 271–291 (ALLEYMLIYLGAALTFLNLPL) traverse the membrane as a helical segment. Residues 292 to 311 (EYLSLVFEMPYMLLLSDIRQ) are Lumenal-facing. Residues 312-332 (GIFYAMLLTFWLVFAGEHMLI) traverse the membrane as a helical segment. Residues 333 to 344 (QDAPNKSTIRSR) lie on the Cytoplasmic side of the membrane. The chain crosses the membrane as a helical span at residues 345-365 (YWKHLSAVVVGCISLFVFDIC). The Lumenal portion of the chain corresponds to 366–390 (ERGVQLRNPFYSIWAMPLAAKMAMT). The chain crosses the membrane as a helical span at residues 391-411 (FIVLAGVSAAIYFLFLCYMIW). The Cytoplasmic portion of the chain corresponds to 412-441 (KVFRNIGDKRTSLPSMSQARRLHYESLIYR). The helical transmembrane segment at 442–462 (FKFLMLATIVCAALTVTGFIM) threads the bilayer. The Lumenal portion of the chain corresponds to 463-482 (GQRAEGQWDWNDNVAIQPTS). A helical membrane pass occupies residues 483 to 503 (AFLTGVYGMWNIYIFALLILY). The Cytoplasmic segment spans residues 504 to 562 (APSHKQWPTMHHSDETTQSNENIVASAASEEIEFSHLPSDSNPSEISSLTSFTRKVAFD). The segment at 539–562 (HLPSDSNPSEISSLTSFTRKVAFD) is disordered. The segment covering 541–556 (PSDSNPSEISSLTSFT) has biased composition (polar residues).

Belongs to the wntless family. In terms of assembly, interacts with wg; in the Golgi. Interacts with Vps35, a component of the retromer complex; wls stability is regulated by Vps35.

The protein resides in the presynaptic cell membrane. Its subcellular location is the postsynaptic cell membrane. It is found in the cell membrane. The protein localises to the endoplasmic reticulum membrane. It localises to the endosome membrane. The protein resides in the golgi apparatus membrane. A segment polarity gene required for wingless (wg)-dependent patterning processes, acting in both wg-sending cells and wg-target cells. In non-neuronal cells wls directs wg secretion. The wls traffic loop encompasses the Golgi, the cell surface, an endocytic compartment and a retrograde route leading back to the Golgi, and involves clathrin-mediated endocytosis and the retromer complex (a conserved protein complex consisting of Vps35 and Vps26). In neuronal cells (the larval motorneuron NMJ), the wg signal moves across the synapse via the release of wls-containing exosome-like vesicles. Postsynaptic wls is required for the trafficking of fz2 through the fz2-interacting protein Grip. In Drosophila erecta (Fruit fly), this protein is Protein wntless.